A 314-amino-acid polypeptide reads, in one-letter code: 4-hydroxy-3-methylbut-2-enyl diphosphate reductase (314 aa).

[4Fe-4S] cluster is bound at residue Cys-12. (2E)-4-hydroxy-3-methylbut-2-enyl diphosphate is bound by residues His-41 and His-74. Dimethylallyl diphosphate is bound by residues His-41 and His-74. Isopentenyl diphosphate is bound by residues His-41 and His-74. [4Fe-4S] cluster is bound at residue Cys-96. His-124 is a (2E)-4-hydroxy-3-methylbut-2-enyl diphosphate binding site. His-124 is a binding site for dimethylallyl diphosphate. His-124 is an isopentenyl diphosphate binding site. Catalysis depends on Glu-126, which acts as the Proton donor. Residue Thr-167 participates in (2E)-4-hydroxy-3-methylbut-2-enyl diphosphate binding. Position 197 (Cys-197) interacts with [4Fe-4S] cluster. Positions 225, 226, 227, and 269 each coordinate (2E)-4-hydroxy-3-methylbut-2-enyl diphosphate. Dimethylallyl diphosphate-binding residues include Ser-225, Ser-226, Asn-227, and Ser-269. Isopentenyl diphosphate-binding residues include Ser-225, Ser-226, Asn-227, and Ser-269.

Belongs to the IspH family. The cofactor is [4Fe-4S] cluster.

It carries out the reaction isopentenyl diphosphate + 2 oxidized [2Fe-2S]-[ferredoxin] + H2O = (2E)-4-hydroxy-3-methylbut-2-enyl diphosphate + 2 reduced [2Fe-2S]-[ferredoxin] + 2 H(+). It catalyses the reaction dimethylallyl diphosphate + 2 oxidized [2Fe-2S]-[ferredoxin] + H2O = (2E)-4-hydroxy-3-methylbut-2-enyl diphosphate + 2 reduced [2Fe-2S]-[ferredoxin] + 2 H(+). The protein operates within isoprenoid biosynthesis; dimethylallyl diphosphate biosynthesis; dimethylallyl diphosphate from (2E)-4-hydroxy-3-methylbutenyl diphosphate: step 1/1. Its pathway is isoprenoid biosynthesis; isopentenyl diphosphate biosynthesis via DXP pathway; isopentenyl diphosphate from 1-deoxy-D-xylulose 5-phosphate: step 6/6. Catalyzes the conversion of 1-hydroxy-2-methyl-2-(E)-butenyl 4-diphosphate (HMBPP) into a mixture of isopentenyl diphosphate (IPP) and dimethylallyl diphosphate (DMAPP). Acts in the terminal step of the DOXP/MEP pathway for isoprenoid precursor biosynthesis. This is 4-hydroxy-3-methylbut-2-enyl diphosphate reductase from Actinobacillus pleuropneumoniae serotype 5b (strain L20).